Here is a 205-residue protein sequence, read N- to C-terminus: Thymidine kinase (205 aa).

Residues 9 to 16 and 87 to 90 each bind ATP; these read SAMNAGKS and DECQ. Glutamate 88 (proton acceptor) is an active-site residue. Cysteine 145, cysteine 147, cysteine 182, and histidine 185 together coordinate Zn(2+).

The protein belongs to the thymidine kinase family. In terms of assembly, homotetramer.

It is found in the cytoplasm. It catalyses the reaction thymidine + ATP = dTMP + ADP + H(+). Its activity is regulated as follows. Allosteric enzyme which is feedback inhibited by dTTP and activated by a number of dNDP and dNTP. Phosphorylates both thymidine and deoxyuridine. The polypeptide is Thymidine kinase (Escherichia coli (strain K12)).